Here is a 65-residue protein sequence, read N- to C-terminus: Photosystem II reaction center protein J (65 aa).

Residues 1–17 (MSTKLKGPDGRIPDRLP) show a composition bias toward basic and acidic residues. Residues 1-21 (MSTKLKGPDGRIPDRLPDGSP) form a disordered region. The helical transmembrane segment at 36–56 (LWLVATVGGMAVLSVLGLFFF) threads the bilayer.

Belongs to the PsbJ family. As to quaternary structure, PSII is composed of 1 copy each of membrane proteins PsbA, PsbB, PsbC, PsbD, PsbE, PsbF, PsbH, PsbI, PsbJ, PsbK, PsbL, PsbM, PsbT, PsbX, PsbY, Psb30/Ycf12, peripheral proteins PsbO, CyanoQ (PsbQ), PsbU, PsbV and a large number of cofactors. It forms dimeric complexes.

The protein resides in the cellular thylakoid membrane. One of the components of the core complex of photosystem II (PSII). PSII is a light-driven water:plastoquinone oxidoreductase that uses light energy to abstract electrons from H(2)O, generating O(2) and a proton gradient subsequently used for ATP formation. It consists of a core antenna complex that captures photons, and an electron transfer chain that converts photonic excitation into a charge separation. This is Photosystem II reaction center protein J from Prochlorococcus marinus (strain MIT 9313).